We begin with the raw amino-acid sequence, 286 residues long: ATP synthase gamma chain (286 aa).

It belongs to the ATPase gamma chain family. F-type ATPases have 2 components, CF(1) - the catalytic core - and CF(0) - the membrane proton channel. CF(1) has five subunits: alpha(3), beta(3), gamma(1), delta(1), epsilon(1). CF(0) has three main subunits: a, b and c.

Its subcellular location is the cell inner membrane. Produces ATP from ADP in the presence of a proton gradient across the membrane. The gamma chain is believed to be important in regulating ATPase activity and the flow of protons through the CF(0) complex. In Teredinibacter turnerae (strain ATCC 39867 / T7901), this protein is ATP synthase gamma chain.